The primary structure comprises 502 residues: Glycerol kinase (502 aa).

Position 14 (Thr-14) interacts with ADP. Thr-14, Thr-15, and Ser-16 together coordinate ATP. A sn-glycerol 3-phosphate-binding site is contributed by Thr-14. Arg-18 contributes to the ADP binding site. Positions 84, 85, 136, and 246 each coordinate sn-glycerol 3-phosphate. 5 residues coordinate glycerol: Arg-84, Glu-85, Tyr-136, Asp-246, and Gln-247. Residues Thr-268 and Gly-311 each coordinate ADP. 4 residues coordinate ATP: Thr-268, Gly-311, Gln-315, and Gly-412. The ADP site is built by Gly-412 and Asn-416.

It belongs to the FGGY kinase family. Homotetramer and homodimer (in equilibrium). Heterodimer with EIIA-Glc. Binds 1 zinc ion per glycerol kinase EIIA-Glc dimer. The zinc ion is important for dimerization.

It carries out the reaction glycerol + ATP = sn-glycerol 3-phosphate + ADP + H(+). The protein operates within polyol metabolism; glycerol degradation via glycerol kinase pathway; sn-glycerol 3-phosphate from glycerol: step 1/1. Activity of this regulatory enzyme is affected by several metabolites. Allosterically and non-competitively inhibited by fructose 1,6-bisphosphate (FBP) and unphosphorylated phosphocarrier protein EIIA-Glc (III-Glc), an integral component of the bacterial phosphotransferase (PTS) system. In terms of biological role, key enzyme in the regulation of glycerol uptake and metabolism. Catalyzes the phosphorylation of glycerol to yield sn-glycerol 3-phosphate. This chain is Glycerol kinase, found in Enterobacter sp. (strain 638).